The following is a 342-amino-acid chain: Isopentenyl-diphosphate delta-isomerase (342 aa).

R11–K12 contributes to the substrate binding site. Residues S68, S69 to T71, S99, and N127 each bind FMN. Residue S99–R101 coordinates substrate. Position 163 (E163) interacts with Mg(2+). FMN-binding positions include K194, T224, and A295–G296.

The protein belongs to the IPP isomerase type 2 family. As to quaternary structure, homooctamer. Dimer of tetramers. The cofactor is FMN. NADPH is required as a cofactor. Mg(2+) serves as cofactor.

It localises to the cytoplasm. The enzyme catalyses isopentenyl diphosphate = dimethylallyl diphosphate. Functionally, involved in the biosynthesis of isoprenoids. Catalyzes the 1,3-allylic rearrangement of the homoallylic substrate isopentenyl (IPP) to its allylic isomer, dimethylallyl diphosphate (DMAPP). This is Isopentenyl-diphosphate delta-isomerase from Rickettsia typhi (strain ATCC VR-144 / Wilmington).